We begin with the raw amino-acid sequence, 72 residues long: Translational regulator CsrA (72 aa).

This sequence belongs to the CsrA/RsmA family. In terms of assembly, homodimer; the beta-strands of each monomer intercalate to form a hydrophobic core, while the alpha-helices form wings that extend away from the core.

It is found in the cytoplasm. Its function is as follows. A translational regulator that binds mRNA to regulate translation initiation and/or mRNA stability. Usually binds in the 5'-UTR at or near the Shine-Dalgarno sequence preventing ribosome-binding, thus repressing translation. Its main target seems to be the major flagellin gene, while its function is anatagonized by FliW. This chain is Translational regulator CsrA, found in Agathobacter rectalis (strain ATCC 33656 / DSM 3377 / JCM 17463 / KCTC 5835 / VPI 0990) (Eubacterium rectale).